The following is a 199-amino-acid chain: 3-isopropylmalate dehydratase small subunit (199 aa).

The protein belongs to the LeuD family. LeuD type 1 subfamily. Heterodimer of LeuC and LeuD.

The catalysed reaction is (2R,3S)-3-isopropylmalate = (2S)-2-isopropylmalate. It functions in the pathway amino-acid biosynthesis; L-leucine biosynthesis; L-leucine from 3-methyl-2-oxobutanoate: step 2/4. Functionally, catalyzes the isomerization between 2-isopropylmalate and 3-isopropylmalate, via the formation of 2-isopropylmaleate. This is 3-isopropylmalate dehydratase small subunit from Bacillus licheniformis (strain ATCC 14580 / DSM 13 / JCM 2505 / CCUG 7422 / NBRC 12200 / NCIMB 9375 / NCTC 10341 / NRRL NRS-1264 / Gibson 46).